Reading from the N-terminus, the 375-residue chain is Carbamoyl phosphate synthase small chain (375 aa).

The CPSase stretch occupies residues 1-186 (MRALLALEDG…LEPGGCAWVG (186 aa)). Residues S45, G238, and G240 each coordinate L-glutamine. In terms of domain architecture, Glutamine amidotransferase type-1 spans 190–375 (RLVVYDFGIK…RNMVREAAGC (186 aa)). Catalysis depends on C265, which acts as the Nucleophile. 5 residues coordinate L-glutamine: L266, Q269, N307, G309, and F310. Catalysis depends on residues H348 and E350.

Belongs to the CarA family. In terms of assembly, composed of two chains; the small (or glutamine) chain promotes the hydrolysis of glutamine to ammonia, which is used by the large (or ammonia) chain to synthesize carbamoyl phosphate. Tetramer of heterodimers (alpha,beta)4.

It catalyses the reaction hydrogencarbonate + L-glutamine + 2 ATP + H2O = carbamoyl phosphate + L-glutamate + 2 ADP + phosphate + 2 H(+). The enzyme catalyses L-glutamine + H2O = L-glutamate + NH4(+). It participates in amino-acid biosynthesis; L-arginine biosynthesis; carbamoyl phosphate from bicarbonate: step 1/1. It functions in the pathway pyrimidine metabolism; UMP biosynthesis via de novo pathway; (S)-dihydroorotate from bicarbonate: step 1/3. In terms of biological role, small subunit of the glutamine-dependent carbamoyl phosphate synthetase (CPSase). CPSase catalyzes the formation of carbamoyl phosphate from the ammonia moiety of glutamine, carbonate, and phosphate donated by ATP, constituting the first step of 2 biosynthetic pathways, one leading to arginine and/or urea and the other to pyrimidine nucleotides. The small subunit (glutamine amidotransferase) binds and cleaves glutamine to supply the large subunit with the substrate ammonia. The sequence is that of Carbamoyl phosphate synthase small chain from Nitratidesulfovibrio vulgaris (strain ATCC 29579 / DSM 644 / CCUG 34227 / NCIMB 8303 / VKM B-1760 / Hildenborough) (Desulfovibrio vulgaris).